Consider the following 255-residue polypeptide: 5'-nucleotidase SurE (255 aa).

A divalent metal cation contacts are provided by Asp-8, Asp-9, Ser-40, and Asn-93.

This sequence belongs to the SurE nucleotidase family. A divalent metal cation is required as a cofactor.

The protein resides in the cytoplasm. The catalysed reaction is a ribonucleoside 5'-phosphate + H2O = a ribonucleoside + phosphate. Nucleotidase that shows phosphatase activity on nucleoside 5'-monophosphates. The sequence is that of 5'-nucleotidase SurE from Azorhizobium caulinodans (strain ATCC 43989 / DSM 5975 / JCM 20966 / LMG 6465 / NBRC 14845 / NCIMB 13405 / ORS 571).